The chain runs to 787 residues: Endonuclease MutS2 (787 aa).

Residue 336 to 343 (GPNTGGKT) coordinates ATP. Residues 712-787 (LDLRGVRYED…GNGATEVQFK (76 aa)) enclose the Smr domain.

Belongs to the DNA mismatch repair MutS family. MutS2 subfamily. As to quaternary structure, homodimer. Binds to stalled ribosomes, contacting rRNA.

Functionally, endonuclease that is involved in the suppression of homologous recombination and thus may have a key role in the control of bacterial genetic diversity. In terms of biological role, acts as a ribosome collision sensor, splitting the ribosome into its 2 subunits. Detects stalled/collided 70S ribosomes which it binds and splits by an ATP-hydrolysis driven conformational change. Acts upstream of the ribosome quality control system (RQC), a ribosome-associated complex that mediates the extraction of incompletely synthesized nascent chains from stalled ribosomes and their subsequent degradation. Probably generates substrates for RQC. This is Endonuclease MutS2 from Lactiplantibacillus plantarum (strain ATCC BAA-793 / NCIMB 8826 / WCFS1) (Lactobacillus plantarum).